The following is a 942-amino-acid chain: VPS35 endosomal protein sorting factor-like (942 aa).

The protein belongs to the VPS35L family. Component of the heterotrimeric retriever complex.

It is found in the endosome. In terms of biological role, acts as a component of the retriever complex. The retriever complex is a heterotrimeric complex related to retromer cargo-selective complex (CSC) and essential for retromer-independent retrieval and recycling of numerous cargos. This chain is VPS35 endosomal protein sorting factor-like, found in Drosophila melanogaster (Fruit fly).